Reading from the N-terminus, the 178-residue chain is Large ribosomal subunit protein uL6 (178 aa).

It belongs to the universal ribosomal protein uL6 family. In terms of assembly, part of the 50S ribosomal subunit.

In terms of biological role, this protein binds to the 23S rRNA, and is important in its secondary structure. It is located near the subunit interface in the base of the L7/L12 stalk, and near the tRNA binding site of the peptidyltransferase center. The polypeptide is Large ribosomal subunit protein uL6 (Enterococcus faecalis (strain ATCC 700802 / V583)).